Here is a 677-residue protein sequence, read N- to C-terminus: Vertnin (677 aa).

Disordered regions lie at residues 356–376 (GSTG…SSPE) and 458–490 (HSGS…KLSP). Over residues 458–472 (HSGSSEEGSDADKSQ) the composition is skewed to basic and acidic residues.

This sequence belongs to the vertnin family.

The protein localises to the nucleus. Functions as a transcriptional repressor that modulates bmp2b expression during dorsoventral patterning. The chain is Vertnin (vrtn) from Danio rerio (Zebrafish).